The primary structure comprises 317 residues: Protease HtpX homolog (317 aa).

2 helical membrane passes run 6–26 (TAIL…AIGG) and 28–48 (GGMM…YWNS). Residue His130 coordinates Zn(2+). Glu131 is an active-site residue. Position 134 (His134) interacts with Zn(2+). 2 helical membrane-spanning segments follow: residues 145 to 165 (MTAT…LFGG) and 173 to 193 (PFGA…AMLV). A Zn(2+)-binding site is contributed by Glu202. Residues 283 to 317 (GGGGFAPGPAPAVRPPGGNPWGVDPGGGQRRGPWG) form a disordered region. Over residues 290 to 300 (GPAPAVRPPGG) the composition is skewed to pro residues. Residues 306 to 317 (DPGGGQRRGPWG) are compositionally biased toward gly residues.

The protein belongs to the peptidase M48B family. Zn(2+) serves as cofactor.

Its subcellular location is the cell inner membrane. The chain is Protease HtpX homolog from Xanthobacter autotrophicus (strain ATCC BAA-1158 / Py2).